Reading from the N-terminus, the 409-residue chain is MALINEHFLKLQNNYLFSDIAKKVNSFKVTHPKDKIIRMGIGDVTQPLAPAVIEAMHKAVEEMASKDTFHGYGPEQGYPFLIDAIIKNDYASRGVFIEPSEVFISDGAKSDCGNIGDMLRHDNSIGVTDPVYPVYIDSNVMSGRTGVLENGKWSDVVYIPCTAENNFVPDLPSRRVDILYLCYPNNPTGTTLTKDELKKWVNYALANDVLIMYDSAYEAYIQDPNIPHSIYEIKGAKKVAIEFRSFSKTAGFTGIRCGYTVVPKELNAFTLDGQRVQLNKLWNRRQCTKFNGTSYITQRGAEAVYSTAGKQQVTATINYYMTNAKIMKEGLQNCGLTVYGGDNAPYLWLKTPDGLSSWKFFDKLLYEVKIVGTPGVGFGPSGEGYLRLTAFGDRDDTLEAMARLRKWLR.

The substrate site is built by tyrosine 15 and glycine 42. Residues tyrosine 72, 108-109, tyrosine 132, asparagine 186, tyrosine 217, and 245-247 each bind pyridoxal 5'-phosphate; these read AK and SFS. Positions 109, 132, and 186 each coordinate substrate. Lysine 248 is subject to N6-(pyridoxal phosphate)lysine. Residues arginine 256 and asparagine 291 each coordinate pyridoxal 5'-phosphate. Asparagine 291 and arginine 387 together coordinate substrate.

Belongs to the class-I pyridoxal-phosphate-dependent aminotransferase family. LL-diaminopimelate aminotransferase subfamily. In terms of assembly, homodimer. Requires pyridoxal 5'-phosphate as cofactor.

The enzyme catalyses (2S,6S)-2,6-diaminopimelate + 2-oxoglutarate = (S)-2,3,4,5-tetrahydrodipicolinate + L-glutamate + H2O + H(+). Its pathway is amino-acid biosynthesis; L-lysine biosynthesis via DAP pathway; LL-2,6-diaminopimelate from (S)-tetrahydrodipicolinate (aminotransferase route): step 1/1. Functionally, involved in the synthesis of meso-diaminopimelate (m-DAP or DL-DAP), required for both lysine and peptidoglycan biosynthesis. Catalyzes the direct conversion of tetrahydrodipicolinate to LL-diaminopimelate. This is LL-diaminopimelate aminotransferase from Parabacteroides distasonis (strain ATCC 8503 / DSM 20701 / CIP 104284 / JCM 5825 / NCTC 11152).